The following is a 328-amino-acid chain: Cytochrome c biogenesis protein CcsA (328 aa).

The next 8 membrane-spanning stretches (helical) occupy residues 13–33, 46–66, 73–93, 101–121, 146–166, 234–254, 263–283, and 295–315; these read ISFS…LVNL, GIVI…IYSG, LYES…VSYF, LNAI…SGLL, MILG…LLVI, IISL…VWAN, WDPK…YLHI, and AIVA…VNLL.

It belongs to the CcmF/CycK/Ccl1/NrfE/CcsA family. May interact with Ccs1.

The protein resides in the plastid. It is found in the chloroplast thylakoid membrane. Its function is as follows. Required during biogenesis of c-type cytochromes (cytochrome c6 and cytochrome f) at the step of heme attachment. The polypeptide is Cytochrome c biogenesis protein CcsA (Nasturtium officinale (Watercress)).